A 183-amino-acid polypeptide reads, in one-letter code: Peptidyl-prolyl cis-trans isomerase 11 (183 aa).

The PPIase cyclophilin-type domain maps to 20 to 182; it reads FLEVTAGGAP…LPIVVVQCGQ (163 aa).

Belongs to the cyclophilin-type PPIase family. PPIase H subfamily.

The enzyme catalyses [protein]-peptidylproline (omega=180) = [protein]-peptidylproline (omega=0). PPIases accelerate the folding of proteins. It catalyzes the cis-trans isomerization of proline imidic peptide bonds in oligopeptides. This Caenorhabditis elegans protein is Peptidyl-prolyl cis-trans isomerase 11 (cyn-11).